Reading from the N-terminus, the 292-residue chain is NAD kinase (292 aa).

Catalysis depends on Asp73, which acts as the Proton acceptor. NAD(+)-binding positions include 73–74, 147–148, His158, Arg175, Asp177, 188–193, and Gln247; these read DG, NE, and TAYSLS.

It belongs to the NAD kinase family. Requires a divalent metal cation as cofactor.

The protein localises to the cytoplasm. The enzyme catalyses NAD(+) + ATP = ADP + NADP(+) + H(+). Functionally, involved in the regulation of the intracellular balance of NAD and NADP, and is a key enzyme in the biosynthesis of NADP. Catalyzes specifically the phosphorylation on 2'-hydroxyl of the adenosine moiety of NAD to yield NADP. This chain is NAD kinase, found in Serratia proteamaculans (strain 568).